A 427-amino-acid polypeptide reads, in one-letter code: Clusterin-associated protein 1 homolog (427 aa).

Residues 202 to 307 (LLNNVSSDEA…LKEEEKRLMR (106 aa)) are a coiled coil. The span at 300-313 (EEEKRLMRSGVARD) shows a compositional bias: basic and acidic residues. The tract at residues 300–427 (EEEKRLMRSG…QILEESDNDF (128 aa)) is disordered. Acidic residues-rich tracts occupy residues 314–332 (EDSD…DIDD) and 363–400 (SEET…DNDS).

This sequence belongs to the CLUAP1 family.

Its subcellular location is the nucleus. It localises to the cell projection. The protein resides in the cilium. Its function is as follows. Required for cilia biogenesis and maintenance in the kidney, the lateral line organ and eye. Appears to function within the multiple intraflagellar transport complex B (IFT-B). This chain is Clusterin-associated protein 1 homolog (cluap1), found in Danio rerio (Zebrafish).